A 218-amino-acid chain; its full sequence is uncharacterized protein (218 aa).

The interval 1–24 is disordered; the sequence is MAAQPQAPSAGGRPRAGKAVKSVA. In terms of domain architecture, HTH tetR-type spans 28 to 88; that stretch reads KLSRESIVEG…AVRIRVIDDI (61 aa). Positions 51–70 form a DNA-binding region, H-T-H motif; that stretch reads TINALATQLGTKGPSLYNHV. T57 bears the Phosphothreonine; by PknH mark.

Post-translationally, phosphorylated on Thr-57 by PknH.

This is an uncharacterized protein from Mycobacterium tuberculosis (strain ATCC 25618 / H37Rv).